Consider the following 57-residue polypeptide: UPF0391 membrane protein RPC_3278 (57 aa).

The next 2 membrane-spanning stretches (helical) occupy residues 4-24 (WVITFLVVALIAGILGFGGIA) and 30-50 (IAKIIFFIAVVLFLVSAVVGL).

The protein belongs to the UPF0391 family.

The protein resides in the cell membrane. This Rhodopseudomonas palustris (strain BisB18) protein is UPF0391 membrane protein RPC_3278.